A 462-amino-acid polypeptide reads, in one-letter code: L-seryl-tRNA(Sec) selenium transferase (462 aa).

Lys-293 carries the N6-(pyridoxal phosphate)lysine modification.

This sequence belongs to the SelA family. The cofactor is pyridoxal 5'-phosphate.

It is found in the cytoplasm. It catalyses the reaction L-seryl-tRNA(Sec) + selenophosphate + H(+) = L-selenocysteinyl-tRNA(Sec) + phosphate. It functions in the pathway aminoacyl-tRNA biosynthesis; selenocysteinyl-tRNA(Sec) biosynthesis; selenocysteinyl-tRNA(Sec) from L-seryl-tRNA(Sec) (bacterial route): step 1/1. In terms of biological role, converts seryl-tRNA(Sec) to selenocysteinyl-tRNA(Sec) required for selenoprotein biosynthesis. In Clostridium botulinum (strain Okra / Type B1), this protein is L-seryl-tRNA(Sec) selenium transferase.